The sequence spans 1603 residues: Vitellogenin-3 (1603 aa).

The first 15 residues, 1–15 (MKSIIIASLVALAIA), serve as a signal peptide directing secretion. The 662-residue stretch at 24–685 (FSPKSEYVYK…EKNAFLPKEV (662 aa)) folds into the Vitellogenin domain. Asn-1266 carries N-linked (GlcNAc...) asparagine glycosylation. One can recognise a VWFD domain in the interval 1306–1475 (ATCKVGQSEV…SYLLKNEECE (170 aa)). 2 disulfide bridges follow: Cys-1308-Cys-1438 and Cys-1330-Cys-1474.

As to expression, expressed in the intestine of adult hermaphrodites.

It is found in the secreted. In terms of biological role, precursor of the egg-yolk proteins that are sources of nutrients during embryonic development. Together with other vitellogenins, may play a role in modulating life-span, acting via induction of autophagy and lysosomal lipolysis. In Caenorhabditis elegans, this protein is Vitellogenin-3 (vit-3).